The following is a 234-amino-acid chain: Toxic shock syndrome toxin-1 (234 aa).

A signal peptide spans 1–40 (MNKKLLMNFFIVSPLLLATTATDFTPVPLSSNQIIKTAKA).

It belongs to the staphylococcal/streptococcal toxin family.

It localises to the secreted. Its function is as follows. Responsible for the symptoms of toxic shock syndrome. The chain is Toxic shock syndrome toxin-1 (tst) from Staphylococcus aureus.